The sequence spans 398 residues: S-adenosylmethionine synthase (398 aa).

An ATP-binding site is contributed by 136–141 (GTGSSD).

The protein belongs to the AdoMet synthase 2 family. Mg(2+) is required as a cofactor.

It carries out the reaction L-methionine + ATP + H2O = S-adenosyl-L-methionine + phosphate + diphosphate. It participates in amino-acid biosynthesis; S-adenosyl-L-methionine biosynthesis; S-adenosyl-L-methionine from L-methionine: step 1/1. Functionally, catalyzes the formation of S-adenosylmethionine from methionine and ATP. This is S-adenosylmethionine synthase from Methanosarcina mazei (strain ATCC BAA-159 / DSM 3647 / Goe1 / Go1 / JCM 11833 / OCM 88) (Methanosarcina frisia).